The following is a 261-amino-acid chain: 14-3-3-like protein GF14-12 (261 aa).

It belongs to the 14-3-3 family.

In terms of biological role, is associated with a DNA binding complex to bind to the G box, a well-characterized cis-acting DNA regulatory element found in plant genes. The chain is 14-3-3-like protein GF14-12 (GRF2) from Zea mays (Maize).